Reading from the N-terminus, the 164-residue chain is Large ribosomal subunit protein uL11 (164 aa).

This sequence belongs to the universal ribosomal protein uL11 family. Part of the ribosomal stalk of the 50S ribosomal subunit. Interacts with L10 and the large rRNA to form the base of the stalk. L10 forms an elongated spine to which L12 dimers bind in a sequential fashion forming a multimeric L10(L12)X complex.

Forms part of the ribosomal stalk which helps the ribosome interact with GTP-bound translation factors. The polypeptide is Large ribosomal subunit protein uL11 (Pyrococcus abyssi (strain GE5 / Orsay)).